The chain runs to 249 residues: Coproheme decarboxylase (249 aa).

Residues arginine 131, 145-149, histidine 172, glutamine 185, and serine 223 each bind Fe-coproporphyrin III; that span reads YPMDK. The active site involves tyrosine 145.

This sequence belongs to the ChdC family. Type 1 subfamily. Fe-coproporphyrin III serves as cofactor.

It catalyses the reaction Fe-coproporphyrin III + 2 H2O2 + 2 H(+) = heme b + 2 CO2 + 4 H2O. It carries out the reaction Fe-coproporphyrin III + H2O2 + H(+) = harderoheme III + CO2 + 2 H2O. The enzyme catalyses harderoheme III + H2O2 + H(+) = heme b + CO2 + 2 H2O. It functions in the pathway porphyrin-containing compound metabolism; protoheme biosynthesis. Functionally, involved in coproporphyrin-dependent heme b biosynthesis. Catalyzes the decarboxylation of Fe-coproporphyrin III (coproheme) to heme b (protoheme IX), the last step of the pathway. The reaction occurs in a stepwise manner with a three-propionate intermediate. This is Coproheme decarboxylase from Halalkalibacterium halodurans (strain ATCC BAA-125 / DSM 18197 / FERM 7344 / JCM 9153 / C-125) (Bacillus halodurans).